Here is a 129-residue protein sequence, read N- to C-terminus: Large ribosomal subunit protein uL22 (129 aa).

It belongs to the universal ribosomal protein uL22 family. Part of the 50S ribosomal subunit.

This protein binds specifically to 23S rRNA; its binding is stimulated by other ribosomal proteins, e.g. L4, L17, and L20. It is important during the early stages of 50S assembly. It makes multiple contacts with different domains of the 23S rRNA in the assembled 50S subunit and ribosome. Functionally, the globular domain of the protein is located near the polypeptide exit tunnel on the outside of the subunit, while an extended beta-hairpin is found that lines the wall of the exit tunnel in the center of the 70S ribosome. In Bartonella henselae (strain ATCC 49882 / DSM 28221 / CCUG 30454 / Houston 1) (Rochalimaea henselae), this protein is Large ribosomal subunit protein uL22.